The chain runs to 87 residues: Small ribosomal subunit protein bS16 (87 aa).

This sequence belongs to the bacterial ribosomal protein bS16 family.

In Nitrosospira multiformis (strain ATCC 25196 / NCIMB 11849 / C 71), this protein is Small ribosomal subunit protein bS16.